A 532-amino-acid polypeptide reads, in one-letter code: Chaperonin GroEL 2 (532 aa).

ATP is bound by residues 30–33, Lys51, 87–91, Gly415, 479–481, and Asp495; these read TLGP, DGTTT, and NAA.

The protein belongs to the chaperonin (HSP60) family. Forms a cylinder of 14 subunits composed of two heptameric rings stacked back-to-back. Interacts with the co-chaperonin GroES.

The protein resides in the cytoplasm. It carries out the reaction ATP + H2O + a folded polypeptide = ADP + phosphate + an unfolded polypeptide.. Functionally, together with its co-chaperonin GroES, plays an essential role in assisting protein folding. The GroEL-GroES system forms a nano-cage that allows encapsulation of the non-native substrate proteins and provides a physical environment optimized to promote and accelerate protein folding. The polypeptide is Chaperonin GroEL 2 (Vibrio parahaemolyticus serotype O3:K6 (strain RIMD 2210633)).